A 1124-amino-acid chain; its full sequence is tRNA (34-2'-O)-methyltransferase regulator WDR6 (1124 aa).

M1 carries the N-acetylmethionine modification. 19 WD repeats span residues 53–97, 105–143, 147–189, 200–238, 247–285, 289–327, 335–376, 381–422, 425–470, 476–520, 557–596, 602–640, 643–682, 743–789, 852–897, 905–950, 974–1015, 1039–1076, and 1082–1124; these read MKRV…IVKI, RELWRSGLWNMSDWIWDARWLEGNIALALGHNSVVLYDP, CSLQ…VWYP, VPDRRVSGHVGVIFSMSYLESKGLLATASEDRSVRIWKV, RVQNIGHCFGHSARVWQVKLLENYLISAGEDCVCLVWSH, ILQAFRGHQGRGIRALAAHERQAWVITGGDDSGIRLWHL, SGVF…LYDL, WEQL…VVPI, PTAA…ISAA, IFVK…LYPS, PMSTLPSLHGKQGVTSVTCHGGYVYTTGRDGSYYQLFVRG, VLRQKPCRGMNWVAGVRMVADGNMVILGFHANEFVVWSP, HEKLHIINCGGGHRSWAFSDTEAAMAFAYLKDGDVMLYRA, LIDI…VWGV, RHRH…LFLL, QLLA…FWDL, GSPC…VFVL, EEYSVPCAHAAHVTGLKILSRSLMVSASIDQRLTFWRL, and TFMN…NWYD.

This sequence belongs to the WD repeat WDR6 family. In terms of assembly, interacts with FTSJ1; the interaction is direct, and required for 2'-O-methylation of position 34 in substrate tRNAs. Interacts with IRS4. Interacts with STK11/LKB1.

The protein resides in the cytoplasm. Together with methyltransferase FTSJ1, methylates the 2'-O-ribose of nucleotides at position 34 of the tRNA anticodon loop of substrate tRNAs. Required for the correct positioning of the substrate tRNA for methylation. Required to suppress amino acid starvation-induced autophagy. Enhances the STK11/LKB1-induced cell growth suppression activity. In Bos taurus (Bovine), this protein is tRNA (34-2'-O)-methyltransferase regulator WDR6 (WDR6).